Here is a 237-residue protein sequence, read N- to C-terminus: Orotidine 5'-phosphate decarboxylase (237 aa).

Residues Asp-10, Lys-33, 60-69, Thr-123, Arg-185, Gln-194, Gly-214, and Arg-215 each bind substrate; that span reads DLKLHDIPNT. The Proton donor role is filled by Lys-62.

Belongs to the OMP decarboxylase family. Type 1 subfamily. In terms of assembly, homodimer.

The catalysed reaction is orotidine 5'-phosphate + H(+) = UMP + CO2. The protein operates within pyrimidine metabolism; UMP biosynthesis via de novo pathway; UMP from orotate: step 2/2. Catalyzes the decarboxylation of orotidine 5'-monophosphate (OMP) to uridine 5'-monophosphate (UMP). The protein is Orotidine 5'-phosphate decarboxylase of Enterococcus faecalis (strain ATCC 700802 / V583).